The primary structure comprises 299 residues: Virginiamycin B lyase (299 aa).

A substrate-binding site is contributed by His-229. A Mg(2+)-binding site is contributed by Glu-269. The Proton acceptor role is filled by His-271. Glu-286 provides a ligand contact to Mg(2+).

This sequence belongs to the Vgb family. As to quaternary structure, monomer. Requires Mg(2+) as cofactor.

In terms of biological role, inactivates the type B streptogramin antibiotics by linearizing the lactone ring at the ester linkage, generating a free phenylglycine carboxylate and converting the threonyl moiety into 2-amino-butenoic acid. The sequence is that of Virginiamycin B lyase from Bordetella parapertussis (strain 12822 / ATCC BAA-587 / NCTC 13253).